The following is a 240-amino-acid chain: Serine protease SplB (240 aa).

The signal sequence occupies residues methionine 1–alanine 36. Residues histidine 75, aspartate 113, and serine 193 each act as charge relay system in the active site.

It belongs to the peptidase S1B family.

It localises to the secreted. Serine protease that cleaves specifically after the sequence Trp-Glu-Leu-Gln. This chain is Serine protease SplB (splB), found in Staphylococcus aureus (strain bovine RF122 / ET3-1).